We begin with the raw amino-acid sequence, 265 residues long: Cytochrome c oxidase subunit 3 (265 aa).

A run of 6 helical transmembrane segments spans residues 16 to 36 (PWPISGSLGALATTVGGVMYM), 41 to 61 (GGATLLSLGLIFLLYTMFVWW), 84 to 104 (YGSILFIVSEVMFLFAFFWAS), 162 to 182 (AVYALVATVSLALVSTGFQGM), 200 to 220 (FFLATGFHGFHVIIGTLFLIV), and 245 to 265 (WHFVDVVRLFPFVSIYWWGGI).

Belongs to the cytochrome c oxidase subunit 3 family. As to quaternary structure, component of the cytochrome c oxidase (complex IV, CIV), a multisubunit enzyme composed of a catalytic core of 3 subunits and several supernumerary subunits. The complex exists as a monomer or a dimer and forms supercomplexes (SCs) in the inner mitochondrial membrane with ubiquinol-cytochrome c oxidoreductase (cytochrome b-c1 complex, complex III, CIII).

Its subcellular location is the mitochondrion inner membrane. The catalysed reaction is 4 Fe(II)-[cytochrome c] + O2 + 8 H(+)(in) = 4 Fe(III)-[cytochrome c] + 2 H2O + 4 H(+)(out). Its function is as follows. Component of the cytochrome c oxidase, the last enzyme in the mitochondrial electron transport chain which drives oxidative phosphorylation. The respiratory chain contains 3 multisubunit complexes succinate dehydrogenase (complex II, CII), ubiquinol-cytochrome c oxidoreductase (cytochrome b-c1 complex, complex III, CIII) and cytochrome c oxidase (complex IV, CIV), that cooperate to transfer electrons derived from NADH and succinate to molecular oxygen, creating an electrochemical gradient over the inner membrane that drives transmembrane transport and the ATP synthase. Cytochrome c oxidase is the component of the respiratory chain that catalyzes the reduction of oxygen to water. Electrons originating from reduced cytochrome c in the intermembrane space (IMS) are transferred via the dinuclear copper A center (CU(A)) of subunit 2 and heme A of subunit 1 to the active site in subunit 1, a binuclear center (BNC) formed by heme A3 and copper B (CU(B)). The BNC reduces molecular oxygen to 2 water molecules using 4 electrons from cytochrome c in the IMS and 4 protons from the mitochondrial matrix. The polypeptide is Cytochrome c oxidase subunit 3 (COX3) (Aegilops columnaris (Goatgrass)).